The primary structure comprises 347 residues: 4-hydroxy-tetrahydrodipicolinate reductase 1, chloroplastic (347 aa).

The N-terminal 51 residues, 1–51 (MATNGLMASSSVFLHRPRIAFASRTNQTVGKYGKGRVSFMGIGTRRLPVVL), are a transit peptide targeting the chloroplast. Ser52 bears the N-acetylserine mark. Residues 79–84 (GCSGKM), 171–173 (GTT), and 194–197 (SPQM) each bind NAD(+). The active-site Proton donor/acceptor is the His230. Residue Lys234 is the Proton donor of the active site. 239-240 (GT) contributes to the (S)-2,3,4,5-tetrahydrodipicolinate binding site.

Belongs to the DapB family.

The protein localises to the plastid. It localises to the chloroplast. The catalysed reaction is (S)-2,3,4,5-tetrahydrodipicolinate + NAD(+) + H2O = (2S,4S)-4-hydroxy-2,3,4,5-tetrahydrodipicolinate + NADH + H(+). It catalyses the reaction (S)-2,3,4,5-tetrahydrodipicolinate + NADP(+) + H2O = (2S,4S)-4-hydroxy-2,3,4,5-tetrahydrodipicolinate + NADPH + H(+). Its pathway is amino-acid biosynthesis; L-lysine biosynthesis via DAP pathway; (S)-tetrahydrodipicolinate from L-aspartate: step 4/4. Its function is as follows. Catalyzes the conversion of 4-hydroxy-tetrahydrodipicolinate (HTPA) to tetrahydrodipicolinate. The polypeptide is 4-hydroxy-tetrahydrodipicolinate reductase 1, chloroplastic (DAPB1) (Arabidopsis thaliana (Mouse-ear cress)).